The primary structure comprises 316 residues: HTH-type transcriptional regulator PecT (316 aa).

The HTH lysR-type domain occupies 11–68 (LDLDLLRTFVAVADLNTFAAAAVAVCRTQSAVSQQMQRLEQLIGKELFARHGRNKLLT). Positions 28 to 47 (FAAAAVAVCRTQSAVSQQMQ) form a DNA-binding region, H-T-H motif. The segment at 293–316 (LPVSTGTESELREPPTDESLKDIT) is disordered. A compositionally biased stretch (basic and acidic residues) spans 301 to 316 (SELREPPTDESLKDIT).

This sequence belongs to the LysR transcriptional regulatory family.

In terms of biological role, regulates pectinase gene expression. The chain is HTH-type transcriptional regulator PecT (pecT) from Dickeya dadantii (strain 3937) (Erwinia chrysanthemi (strain 3937)).